The primary structure comprises 83 residues: uncharacterized protein (83 aa).

3 helical membrane passes run 7–26 (FARF…IVSY), 36–58 (LSPL…ILPF), and 65–82 (ILTV…YLAF).

Its subcellular location is the cell membrane. This is an uncharacterized protein from Archaeoglobus fulgidus (strain ATCC 49558 / DSM 4304 / JCM 9628 / NBRC 100126 / VC-16).